A 278-amino-acid chain; its full sequence is 4-deoxy-L-threo-5-hexosulose-uronate ketol-isomerase (278 aa).

Zn(2+) is bound by residues His196, His198, Glu203, and His245.

The protein belongs to the KduI family. Zn(2+) serves as cofactor.

It carries out the reaction 5-dehydro-4-deoxy-D-glucuronate = 3-deoxy-D-glycero-2,5-hexodiulosonate. The protein operates within glycan metabolism; pectin degradation; 2-dehydro-3-deoxy-D-gluconate from pectin: step 4/5. Its function is as follows. Catalyzes the isomerization of 5-dehydro-4-deoxy-D-glucuronate to 3-deoxy-D-glycero-2,5-hexodiulosonate. This Yersinia pseudotuberculosis serotype O:1b (strain IP 31758) protein is 4-deoxy-L-threo-5-hexosulose-uronate ketol-isomerase.